The following is a 259-amino-acid chain: LOB domain-containing protein CRL1 (259 aa).

The LOB domain occupies 6–108 (SPCGACKFLR…AQLASLKAAA (103 aa)).

It belongs to the LOB domain-containing protein family. As to quaternary structure, can form homodimers. Expressed in unelongating basal internodes, at the base of shoot in parenchyma cells adjacent to the peripheral vascular cylinder of the stem, and root pericycle cells. Expressed in lateral and adventitious root primordia, tiller primordia, vascular tissues, scutellum, and young pedicels.

The protein resides in the nucleus. In terms of biological role, acts as a positive regulator of adventitious (crown) root formation by promoting its initiation. Acts as a positive regulator of lateral root formation. Regulated by the auxin response factor and transcriptional activator ARF23/ARF1. Involved in auxin-mediated cell dedifferentiation, and may promote the initial cell division in the pericycle cells adjacent to the peripheral vascular cylinder at the base of the stem. May act upstream of the gene regulatory network controlling adventitious root (crown) development. This chain is LOB domain-containing protein CRL1, found in Oryza sativa subsp. japonica (Rice).